The primary structure comprises 359 residues: UbiA prenyltransferase domain-containing protein 1 homolog (359 aa).

The segment covering 1–16 (MATSSQLLPNGNLSRN) has biased composition (polar residues). Residues 1–23 (MATSSQLLPNGNLSRNGKTKTED) form a disordered region. Transmembrane regions (helical) follow at residues 67 to 89 (ALRPWSLSASLVPTLLGSALAYR), 98 to 118 (LATFFLTAFTVVTVHCAGNVV), 148 to 168 (VVSLGAILYMAGCGGFVLLAV), 177 to 197 (LALIYFGGLSSSFLYTGGIGF), 200 to 220 (IALGDLVILILFGPISVLFAF), 262 to 284 (IVTLAILIGRTASHVLYAMLLFA), 289 to 311 (FFIFGLKYSLWFLLPLVTLPQAF), and 335 to 355 (FFFGILYVVACCCAHQLPTFG).

It belongs to the UbiA prenyltransferase family.

Its subcellular location is the mitochondrion membrane. It functions in the pathway quinol/quinone metabolism; menaquinone biosynthesis. Prenyltransferase that mediates the formation of menaquinone-4 (MK-4), a vitamin K2 isoform, thereby acting as a mitochondrial electron carrier. Mediates the conversion of phylloquinone (PK) into MK-4, probably by cleaving the side chain of phylloquinone (PK) to release 2-methyl-1,4-naphthoquinone (menadione; K3) and then prenylating it with geranylgeranyl pyrophosphate (GGPP) to form MK-4. MK-4 acts as a membrane electron carrier downstream of a electron transport chain complex, improving mitochondrial oxygen consumption. This Drosophila melanogaster (Fruit fly) protein is UbiA prenyltransferase domain-containing protein 1 homolog (heix).